A 110-amino-acid polypeptide reads, in one-letter code: Protein YcgL (110 aa).

The region spanning 14–98 is the YcgL domain; it reads MFCVIYRSSK…PPEDLLKQHL (85 aa).

In Salmonella arizonae (strain ATCC BAA-731 / CDC346-86 / RSK2980), this protein is Protein YcgL.